We begin with the raw amino-acid sequence, 184 residues long: Large ribosomal subunit protein uL22 (184 aa).

The segment at 160 to 184 is disordered; that stretch reads PEEEVAQKKKISQKKLKKQKLMARE. The span at 167 to 184 shows a compositional bias: basic residues; it reads KKKISQKKLKKQKLMARE.

The protein belongs to the universal ribosomal protein uL22 family. As to quaternary structure, component of the large ribosomal subunit. Expressed in pancreas, lung, colon, cystic duct, gall bladder, kidney and liver. Expressed at high levels in the well differentiated pancreatic tumor cell lines HPAF, COLO 357 and Capan-1, the moderately differentiated pancreatic tumor cell lines T3M-4, AsPc-1 and BxPc-3, the poorly differentiated pancreatic tumor cell line MIA PaCa-2, and the pancreatic tumor cell lines of undefined differentiation status such as SW979. Expressed at lower levels in the poorly differentiated pancreatic tumor cell lines HCG-25 and PANC-1.

It is found in the cytoplasm. In terms of biological role, component of the large ribosomal subunit. The ribosome is a large ribonucleoprotein complex responsible for the synthesis of proteins in the cell. This Homo sapiens (Human) protein is Large ribosomal subunit protein uL22 (RPL17).